Consider the following 700-residue polypeptide: Phenylalanine ammonia-lyase hkm12 (700 aa).

Residue tyrosine 82 is the Proton donor/acceptor of the active site. The segment at residues 183–185 (ASG) is a cross-link (5-imidazolinone (Ala-Gly)). A 2,3-didehydroalanine (Ser) modification is found at serine 184. (E)-cinnamate is bound by residues asparagine 242, glutamine 325, arginine 331, asparagine 361, lysine 432, glutamate 460, and asparagine 463.

It belongs to the PAL/histidase family. In terms of processing, contains an active site 4-methylidene-imidazol-5-one (MIO), which is formed autocatalytically by cyclization and dehydration of residues Ala-Ser-Gly.

The catalysed reaction is L-phenylalanine = (E)-cinnamate + NH4(+). It participates in secondary metabolite biosynthesis. Functionally, phenylalanine ammonia-lyase; part of the gene cluster that mediates the biosynthesis of hancockiamides, an unusual new family of N-cinnamoylated piperazines. The NRPS hkm10 and the NmrA-like reductase hkm9 are proposed to convert two molecules of L-Phe to the intermediary piperazine called xenocockiamide A. Xenocockiamide A is then converted to hancockiamide D via a series of hydroxylations and O-methylations. The tyrosinase hkm6 may catalyze an aromatic hydroxylation, then the 2-oxoglutarate-dependent Fe(II) dioxygenase hkm4 and the FAD-dependent phenol hydroxylase hkm7 may catalyze consecutive hydroxylations to install 2 more hydroxy groups, and the methyltransferase hkm8 probably catalyzes two methylations using 2 molecules of S-adenosyl-L-methionine (SAM). The NRPS hkm11 activates and transfers trans-cinnamate supplied by the PAL hkm12 to hancockiamide D and produces hancockiamide A. NRPS Hkm11 has the flexibility to tolerate the bulky hancockiamide G as a substrate and the absence of the acetyl-transferase hkm3 opens up the opportunity for hkm11 to introduce a second N-cinnamoyl moiety. The cytochrome P450 monooxygenase hkm5 catalyzes the methylenedioxy bridge formation, converting hancockiamide A into hancockiamide G. Hkm5 can also convert hancockiamide B into hancockiamide C, and hancockiamide D into hancockiamide H. The N-acetyltransferase hkm3 finally transfers an acetyl group to 1-N of piperazine, converting hancockiamide A into hancockiamide B and hancockiamide G into hancockiamide C. This Aspergillus hancockii protein is Phenylalanine ammonia-lyase hkm12.